The following is a 162-amino-acid chain: Beta-lactoglobulin (162 aa).

3 cysteine pairs are disulfide-bonded: Cys-66/Cys-160, Cys-106/Cys-119, and Cys-106/Cys-121.

It belongs to the calycin superfamily. Lipocalin family. Under physiological conditions beta-lactoglobulin exists as an equilibrium mixture of monomeric and dimeric forms. Post-translationally, alternate disulfide bonds occur in equal amounts.

It is found in the secreted. Its function is as follows. Lactoglobulin is the primary component of whey, it binds retinol and is probably involved in the transport of that molecule. The chain is Beta-lactoglobulin (LGB) from Ovis aries musimon (Mouflon).